We begin with the raw amino-acid sequence, 805 residues long: Mitochondrial inner membrane m-AAA protease component AFG3L2 (805 aa).

The N-terminal 39 residues, 1 to 39 (MAHRCLLLWGRGACRPRGMPPMLLPGGRTGSTERLYLRM), are a transit peptide targeting the mitochondrion. A propeptide spans 40-67 (LYRYATTQAKTSRNSLLTDVIAAYQRLC) (removed in mature form). The segment at 74–127 (FEKYFPNGKNGKKTSEPKEVMGEKKEPKPAAAPRPSGGGVGGGGKRGGKKDDSH) is disordered. The segment covering 86–101 (KTSEPKEVMGEKKEPK) has biased composition (basic and acidic residues). Residues 109–118 (SGGGVGGGGK) show a composition bias toward gly residues. N6-succinyllysine is present on lysine 118. A run of 2 helical transmembrane segments spans residues 144–164 (FKMYFLWTALFWGGFLFYFLF) and 252–272 (GSFLLSMLPTVLIIAFLLYTI). ATP-binding residues include valine 311, alanine 312, threonine 353, glycine 354, lysine 355, threonine 356, leucine 357, and histidine 491. Histidine 575 lines the Zn(2+) pocket. Residue glutamate 576 is part of the active site. Residues histidine 579 and aspartate 650 each contribute to the Zn(2+) site. Residues 760 to 805 (FVEGTGSLDEDTSLPEGLKDWNREREGSEEPSGEKVTSPVQGAGPA) are disordered. A compositionally biased stretch (basic and acidic residues) spans 776 to 787 (GLKDWNREREGS).

In the N-terminal section; belongs to the AAA ATPase family. The protein in the C-terminal section; belongs to the peptidase M41 family. As to quaternary structure, homohexamer. Forms heterohexamers with SPG7. The m-AAA protease is either composed of homohexamers of AFG3L2 or heterohexamers of AFG3L2 and SPG7. Interacts with MAIP1. Interacts with DNAJC19. Interacts with PHB2. Zn(2+) serves as cofactor. Upon import into the mitochondrion, the N-terminal transit peptide is cleaved to generate an intermediate form which undergoes autocatalytic proteolytic processing to generate the proteolytically active mature form.

It localises to the mitochondrion inner membrane. It catalyses the reaction ATP + H2O = ADP + phosphate + H(+). Functionally, catalytic component of the m-AAA protease, a protease that plays a key role in proteostasis of inner mitochondrial membrane proteins, and which is essential for axonal and neuron development. AFG3L2 possesses both ATPase and protease activities: the ATPase activity is required to unfold substrates, threading them into the internal proteolytic cavity for hydrolysis into small peptide fragments. The m-AAA protease carries out protein quality control in the inner membrane of the mitochondria by mediating degradation of mistranslated or misfolded polypeptides. The m-AAA protease complex also promotes the processing and maturation of mitochondrial proteins, such as MRPL32/bL32m, PINK1 and SP7. Mediates protein maturation of the mitochondrial ribosomal subunit MRPL32/bL32m by catalyzing the cleavage of the presequence of MRPL32/bL32m prior to assembly into the mitochondrial ribosome. Required for SPG7 maturation into its active mature form after SPG7 cleavage by mitochondrial-processing peptidase (MPP). Required for the maturation of PINK1 into its 52kDa mature form after its cleavage by mitochondrial-processing peptidase (MPP). Acts as a regulator of calcium in neurons by mediating degradation of SMDT1/EMRE before its assembly with the uniporter complex, limiting the availability of SMDT1/EMRE for MCU assembly and promoting efficient assembly of gatekeeper subunits with MCU. Promotes the proteolytic degradation of GHITM upon hyperpolarization of mitochondria: progressive GHITM degradation leads to respiratory complex I degradation and broad reshaping of the mitochondrial proteome by AFG3L2. Also acts as a regulator of mitochondrial glutathione homeostasis by mediating cleavage and degradation of SLC25A39. SLC25A39 cleavage is prevented when SLC25A39 binds iron-sulfur. Involved in the regulation of OMA1-dependent processing of OPA1. May act by mediating processing of OMA1 precursor, participating in OMA1 maturation. This Bos taurus (Bovine) protein is Mitochondrial inner membrane m-AAA protease component AFG3L2 (AFG3L2).